A 473-amino-acid polypeptide reads, in one-letter code: B box and SPRY domain-containing protein (473 aa).

The segment at 1-69 (MSADVSGTES…PKQGSERSQL (69 aa)) is disordered. Pro residues predominate over residues 35–51 (KPGPGPEPRPESGPEPG). The B box-type zinc-finger motif lies at 65-113 (ERSQLCPEHFEPLSWFCLSERRPVCATCAGFGGRCHRHRIRRAEEHAEE). Residues 259–455 (SPLLTQLWAA…ISIVRGPLAT (197 aa)) enclose the B30.2/SPRY domain.

In terms of assembly, interacts with YWHAZ/14-3-3 protein zeta. Interacts with TRPV5 and TRPV6. As to expression, according to PubMed:10978534, testis-specific. According to PubMed:16371431, broadly expressed.

It localises to the cytoplasm. The protein localises to the membrane. Functionally, may regulate epithelial calcium transport by inhibiting TRPV5 activity. This is B box and SPRY domain-containing protein (Bspry) from Mus musculus (Mouse).